We begin with the raw amino-acid sequence, 369 residues long: Saccharopine dehydrogenase [NAD(+), L-lysine-forming] (369 aa).

2 residues coordinate L-saccharopine: Arg-19 and Lys-78. The active-site Proton acceptor is Lys-78. The active-site Proton donor is His-96. Gln-101 lines the L-saccharopine pocket. Arg-130 provides a ligand contact to NAD(+). 2 residues coordinate L-saccharopine: Arg-131 and Phe-135. Residues 203-204 (GR), Asp-227, Thr-231, Tyr-251, and Val-278 contribute to the NAD(+) site. A disulfide bridge connects residues Cys-205 and Cys-249. 279-281 (SAD) serves as a coordination point for L-saccharopine. Residue 318-321 (IDHL) participates in NAD(+) binding.

This sequence belongs to the AlaDH/PNT family. Monomer.

The enzyme catalyses L-saccharopine + NAD(+) + H2O = L-lysine + 2-oxoglutarate + NADH + H(+). It functions in the pathway amino-acid biosynthesis; L-lysine biosynthesis via AAA pathway; L-lysine from L-alpha-aminoadipate (fungal route): step 3/3. Catalyzes the NAD(+)-dependent cleavage of saccharopine to L-lysine and 2-oxoglutarate, the final step in the alpha-aminoadipate (AAA) pathway for lysin biosynthesis. This chain is Saccharopine dehydrogenase [NAD(+), L-lysine-forming], found in Yarrowia lipolytica (strain CLIB 122 / E 150) (Yeast).